The sequence spans 310 residues: 1-aminocyclopropane-1-carboxylate oxidase 1 (310 aa).

The stretch at 113-133 (EELSKTMDEYVCQLHKFAERL) forms a coiled coil. The Fe2OG dioxygenase domain maps to 158-259 (PAFGTKVAKY…RLSIATFYNP (102 aa)). Residues His-182, Asp-184, and His-240 each contribute to the Fe cation site. Arg-250 lines the 2-oxoglutarate pocket.

Belongs to the iron/ascorbate-dependent oxidoreductase family. Fe(2+) is required as a cofactor.

It catalyses the reaction 1-aminocyclopropane-1-carboxylate + L-ascorbate + O2 = ethene + L-dehydroascorbate + hydrogen cyanide + CO2 + 2 H2O. It participates in alkene biosynthesis; ethylene biosynthesis via S-adenosyl-L-methionine; ethylene from S-adenosyl-L-methionine: step 2/2. Enzyme involved in the ethylene biosynthesis. May promote stem elongation by maximizing the extensibility cells, possibly by activating ethylene biosynthesis, in response to very-long-chain fatty acids (VLCFAs C20:0 to C30:0). The sequence is that of 1-aminocyclopropane-1-carboxylate oxidase 1 (ACO1) from Arabidopsis thaliana (Mouse-ear cress).